Consider the following 210-residue polypeptide: Ribosomal RNA large subunit methyltransferase E (210 aa).

The S-adenosyl-L-methionine site is built by G64, W66, D84, D100, and D125. The Proton acceptor role is filled by K165.

It belongs to the class I-like SAM-binding methyltransferase superfamily. RNA methyltransferase RlmE family.

It is found in the cytoplasm. The catalysed reaction is uridine(2552) in 23S rRNA + S-adenosyl-L-methionine = 2'-O-methyluridine(2552) in 23S rRNA + S-adenosyl-L-homocysteine + H(+). Its function is as follows. Specifically methylates the uridine in position 2552 of 23S rRNA at the 2'-O position of the ribose in the fully assembled 50S ribosomal subunit. The chain is Ribosomal RNA large subunit methyltransferase E from Chromohalobacter salexigens (strain ATCC BAA-138 / DSM 3043 / CIP 106854 / NCIMB 13768 / 1H11).